A 113-amino-acid polypeptide reads, in one-letter code: TYRO protein tyrosine kinase-binding protein (113 aa).

Positions 1–21 (MGGLEPCSRLLLLPLLLAVSG) are cleaved as a signal peptide. Residues 22 to 40 (LRPVQAQAQSDCSCSTVSP) lie on the Extracellular side of the membrane. The chain crosses the membrane as a helical span at residues 41–61 (GVLAGIVMGDLVLTVLIALAV). D50 provides a ligand contact to Ca(2+). Residues 62-113 (YFLGRLVPRGRGAAEAATRKQRITETESPYQELQGQRSDVYSDLNTQRPYYK) are Cytoplasmic-facing. The segment at 75–113 (AEAATRKQRITETESPYQELQGQRSDVYSDLNTQRPYYK) is disordered. The 29-residue stretch at 80–108 (RKQRITETESPYQELQGQRSDVYSDLNTQ) folds into the ITAM domain. Polar residues predominate over residues 87-113 (TESPYQELQGQRSDVYSDLNTQRPYYK). Y91 and Y102 each carry phosphotyrosine.

It belongs to the TYROBP family. As to quaternary structure, homodimer; disulfide-linked. Homotrimer; disulfide-linked. Homotetramer; disulfide-linked. Homotrimers and homotetramers form when low levels of partner receptors are available and are competitive with assembly with interacting receptors. They may represent alternative oligomerization states or may be intermediates in the receptor assembly process. Binding of a metal cation aids in homooligomerization through coordination of the metal ion by the subunits of the oligomer. Interacts with TREM1. Interacts with TREM2. Interacts with SIRPB1. Interacts with CLECSF5. Interacts with SIGLEC14. Interacts with CD300LB and CD300E. Interacts with CD300C2. Interacts (via ITAM domain) with SYK (via SH2 domains); activates SYK mediating neutrophil and macrophage integrin-mediated activation. Interacts with KLRC2, KIR2DS3 and KIR2DS5. Interacts with CD300H. Interacts with KIR2DS1. Interacts with KLRD1. Interacts with SIGLEC1. In terms of processing, following ligand binding by associated receptors, tyrosine phosphorylated in the ITAM domain which leads to activation of additional tyrosine kinases and subsequent cell activation. In terms of tissue distribution, expressed at low levels in the early development of the hematopoietic system and in the promonocytic stage and at high levels in mature monocytes. Expressed in hematological cells and tissues such as peripheral blood leukocytes and spleen. Also found in bone marrow, lymph nodes, placenta, lung and liver. Expressed at lower levels in different parts of the brain especially in the basal ganglia and corpus callosum.

The protein resides in the cell membrane. In terms of biological role, adapter protein which non-covalently associates with activating receptors found on the surface of a variety of immune cells to mediate signaling and cell activation following ligand binding by the receptors. TYROBP is tyrosine-phosphorylated in the ITAM domain following ligand binding by the associated receptors which leads to activation of additional tyrosine kinases and subsequent cell activation. Also has an inhibitory role in some cells. Non-covalently associates with activating receptors of the CD300 family to mediate cell activation. Also mediates cell activation through association with activating receptors of the CD200R family. Required for neutrophil activation mediated by integrin. Required for the activation of myeloid cells mediated by the CLEC5A/MDL1 receptor. Associates with natural killer (NK) cell receptors such as KIR2DS2 and the KLRD1/KLRC2 heterodimer to mediate NK cell activation. Also enhances trafficking and cell surface expression of NK cell receptors KIR2DS1, KIR2DS2 and KIR2DS4 and ensures their stability at the cell surface. Associates with SIRPB1 to mediate activation of myeloid cells such as monocytes and dendritic cells. Associates with TREM1 to mediate activation of neutrophils and monocytes. Associates with TREM2 on monocyte-derived dendritic cells to mediate up-regulation of chemokine receptor CCR7 and dendritic cell maturation and survival. Association with TREM2 mediates cytokine-induced formation of multinucleated giant cells which are formed by the fusion of macrophages. Stabilizes the TREM2 C-terminal fragment (TREM2-CTF) produced by TREM2 ectodomain shedding which suppresses the release of pro-inflammatory cytokines. In microglia, required with TREM2 for phagocytosis of apoptotic neurons. Required with ITGAM/CD11B in microglia to control production of microglial superoxide ions which promote the neuronal apoptosis that occurs during brain development. Promotes pro-inflammatory responses in microglia following nerve injury which accelerates degeneration of injured neurons. Positively regulates the expression of the IRAK3/IRAK-M kinase and IL10 production by liver dendritic cells and inhibits their T cell allostimulatory ability. Negatively regulates B cell proliferation. Required for CSF1-mediated osteoclast cytoskeletal organization. Positively regulates multinucleation during osteoclast development. The protein is TYRO protein tyrosine kinase-binding protein of Homo sapiens (Human).